The following is a 331-amino-acid chain: MSPSQTQIEKSQLAAPEPEHCPGPESELAGQGDACKGCANQEICSSQTVKGPDPDLPIITERLSAIDHKILVLSGKGGVGKSTFTSMLAWAIAADEEIEVGAMDLDICGPSLPRMLGAEGESVHQSNSGWSPVYVADNLGLMSISFMLPDPDSAIIWRGAKKNGLIKQFLKDVNWGEKLDYLVVDTPPGTSDEHLSVTTYMKEVGIDGALIVTTPQEVALLDVRKEIDFCRKANIKILGLVENMSGFVCPNCKGESQIFKATTGGGKRLCEELGIPFLGSVPLDPRIGKACDMGECFFDSYPDSPAATAILDVVDALRDQVELSLENLAIK.

Residues 1 to 10 (MSPSQTQIEK) are compositionally biased toward polar residues. Residues 1–32 (MSPSQTQIEKSQLAAPEPEHCPGPESELAGQG) are disordered. Residues Cys-21, Cys-35, Cys-38, and Cys-44 each coordinate [4Fe-4S] cluster. 75–82 (GKGGVGKS) contributes to the ATP binding site. Residues Cys-249 and Cys-252 each coordinate [4Fe-4S] cluster.

It belongs to the Mrp/NBP35 ATP-binding proteins family. NUBP1/NBP35 subfamily. In terms of assembly, heterotetramer of 2 NBP35 and 2 CFD1 chains. The cofactor is [4Fe-4S] cluster.

It is found in the cytoplasm. It localises to the nucleus. Its function is as follows. Component of the cytosolic iron-sulfur (Fe/S) protein assembly (CIA) machinery. Required for maturation of extramitochondrial Fe-S proteins. The NBP35-CFD1 heterotetramer forms a Fe-S scaffold complex, mediating the de novo assembly of an Fe-S cluster and its transfer to target apoproteins. Required for biogenesis and export of both ribosomal subunits, which may reflect a role in assembly of the Fe/S clusters in RLI1, a protein which performs rRNA processing and ribosome export. The chain is Cytosolic Fe-S cluster assembly factor NBP35 from Candida albicans (strain SC5314 / ATCC MYA-2876) (Yeast).